Here is a 95-residue protein sequence, read N- to C-terminus: Aspartyl/glutamyl-tRNA(Asn/Gln) amidotransferase subunit C (95 aa).

Belongs to the GatC family. As to quaternary structure, heterotrimer of A, B and C subunits.

It carries out the reaction L-glutamyl-tRNA(Gln) + L-glutamine + ATP + H2O = L-glutaminyl-tRNA(Gln) + L-glutamate + ADP + phosphate + H(+). The catalysed reaction is L-aspartyl-tRNA(Asn) + L-glutamine + ATP + H2O = L-asparaginyl-tRNA(Asn) + L-glutamate + ADP + phosphate + 2 H(+). In terms of biological role, allows the formation of correctly charged Asn-tRNA(Asn) or Gln-tRNA(Gln) through the transamidation of misacylated Asp-tRNA(Asn) or Glu-tRNA(Gln) in organisms which lack either or both of asparaginyl-tRNA or glutaminyl-tRNA synthetases. The reaction takes place in the presence of glutamine and ATP through an activated phospho-Asp-tRNA(Asn) or phospho-Glu-tRNA(Gln). This chain is Aspartyl/glutamyl-tRNA(Asn/Gln) amidotransferase subunit C, found in Rhizorhabdus wittichii (strain DSM 6014 / CCUG 31198 / JCM 15750 / NBRC 105917 / EY 4224 / RW1) (Sphingomonas wittichii).